The sequence spans 411 residues: Multidrug resistance protein MdtH (411 aa).

11 helical membrane-spanning segments follow: residues 13–33 (YFLL…FPLI), 45–65 (ALLV…LGIF), 73–95 (LGAK…FMGI), 99–116 (PWLL…GTLF), 139–159 (LLMI…SWLL), 165–185 (LVCL…AWLL), 213–233 (YVFT…ILPI), 243–263 (AAVR…LYPI), 288–308 (IIPI…GIFY), 340–360 (LGLA…YDMG), and 365–385 (IPQL…LGFY).

Belongs to the major facilitator superfamily. DHA1 family. MdtH (TC 2.A.1.2.21) subfamily.

Its subcellular location is the cell membrane. The protein is Multidrug resistance protein MdtH of Baumannia cicadellinicola subsp. Homalodisca coagulata.